Here is a 470-residue protein sequence, read N- to C-terminus: Sorting nexin-17 (470 aa).

Positions 1 to 109 (MHFSIPETES…SFLRRAQQET (109 aa)) constitute a PX domain. Residues R36, S38, K62, and R75 each coordinate a 1,2-diacyl-sn-glycero-3-phospho-(1D-myo-inositol-3-phosphate). Residues 115 to 206 (EEVSLEVLLS…YKIVLRKSYW (92 aa)) form the Ras-associating domain. Residues 115–432 (EEVSLEVLLS…DASRESMVKL (318 aa)) are FERM-like. The PTB-like F3 module stretch occupies residues 270–432 (GYLRFDACVA…DASRESMVKL (163 aa)). Residues S336, S407, S409, S415, S421, S437, and S440 each carry the phosphoserine modification. The tract at residues 400 to 426 (VGGTLRRSDSQQAVKSPPLLESPDASR) is disordered.

It belongs to the sorting nexin family. In terms of assembly, monomer. Interacts with APP (via cytoplasmic YXNPXY motif). Interacts with KIF1B. Interacts with the C-termini of P-selectin, PTC, LDLR, VLDLR, LRP1 and LRP8. Interacts with KRIT1 (via N-terminus). Interacts with HRAS. Interacts with ITGB1 and ITGB5 (via NPxY motif). Interacts with CCDC22 and CCDC93; the interaction associates SNX17 with the CCC complex. Interacts (via C-terminus) with VPS26C and VPS35L; the interactions are direct and associate SNX17 with the retriever complex.

The protein localises to the cytoplasm. It is found in the early endosome. It localises to the cytoplasmic vesicle membrane. Its function is as follows. Critical regulator of endosomal recycling of numerous surface proteins, including integrins, signaling receptor and channels. Binds to NPxY sequences in the cytoplasmic tails of target cargos. Associates with retriever and CCC complexes to prevent lysosomal degradation and promote cell surface recycling of numerous cargos such as integrins ITGB1, ITGB5 and their associated alpha subunits. Also required for maintenance of normal cell surface levels of APP and LRP1. Interacts with membranes containing phosphatidylinositol 3-phosphate (PtdIns(3P)). The chain is Sorting nexin-17 (SNX17) from Bos taurus (Bovine).